The chain runs to 264 residues: Thiazole synthase (264 aa).

Residue K106 is the Schiff-base intermediate with DXP of the active site. Residues G167, 193-194 (AG), and 215-216 (NS) each bind 1-deoxy-D-xylulose 5-phosphate.

Belongs to the ThiG family. In terms of assembly, homotetramer. Forms heterodimers with either ThiH or ThiS.

It localises to the cytoplasm. It catalyses the reaction [ThiS sulfur-carrier protein]-C-terminal-Gly-aminoethanethioate + 2-iminoacetate + 1-deoxy-D-xylulose 5-phosphate = [ThiS sulfur-carrier protein]-C-terminal Gly-Gly + 2-[(2R,5Z)-2-carboxy-4-methylthiazol-5(2H)-ylidene]ethyl phosphate + 2 H2O + H(+). It participates in cofactor biosynthesis; thiamine diphosphate biosynthesis. Catalyzes the rearrangement of 1-deoxy-D-xylulose 5-phosphate (DXP) to produce the thiazole phosphate moiety of thiamine. Sulfur is provided by the thiocarboxylate moiety of the carrier protein ThiS. In vitro, sulfur can be provided by H(2)S. In Prochlorococcus marinus (strain AS9601), this protein is Thiazole synthase.